The chain runs to 1376 residues: Protein FAM135B (1376 aa).

Residues 431–442 (NEDECEFSEESP) show a composition bias toward acidic residues. A disordered region spans residues 431-489 (NEDECEFSEESPSENTHVGSKPHSIQSTTVHENASFEKPNVGTKAQEDCSTEGPEQGFD). Polar residues predominate over residues 443–462 (SENTHVGSKPHSIQSTTVHE).

Belongs to the FAM135 family.

The sequence is that of Protein FAM135B (fam135b) from Xenopus laevis (African clawed frog).